We begin with the raw amino-acid sequence, 61 residues long: Cobrotoxin-b (61 aa).

4 disulfides stabilise this stretch: C3-C23, C17-C40, C42-C53, and C54-C59.

This sequence belongs to the three-finger toxin family. Short-chain subfamily. Type I alpha-neurotoxin sub-subfamily. As to expression, expressed by the venom gland.

It is found in the secreted. Produces peripheral paralysis by blocking neuromuscular transmission at the postsynaptic site. Binds to the nicotinic acetylcholine receptor. This is Cobrotoxin-b from Naja kaouthia (Monocled cobra).